A 464-amino-acid chain; its full sequence is Lysosomal proton-coupled steroid conjugate and bile acid symporter SLC46A3 (464 aa).

Positions 1–26 (MRKVLLVEPVIFIYIFASSLTSPVVQ) are cleaved as a signal peptide. Topologically, residues 27-71 (QFIYRKLWEEEYNSTAISSDNSSHCERNKSSPTYVMEKAIQEKTS) are extracellular. Residues Asn-39, Asn-47, and Asn-54 are each glycosylated (N-linked (GlcNAc...) asparagine). The helical transmembrane segment at 72 to 92 (FFNMQLDLTGAVPSLIVAFII) threads the bilayer. Residues 93-104 (VANGDHQGRKKS) lie on the Cytoplasmic side of the membrane. The chain crosses the membrane as a helical span at residues 105–125 (LVLPSIGALIADIFLTIVSYF). Residues 126–130 (SWPTS) are Extracellular-facing. The helical transmembrane segment at 131–151 (VLFLATFISGLFGSMATFLGG) threads the bilayer. The Cytoplasmic segment spans residues 152-171 (GFAYIADQCHDEKQKTTRIA). A helical membrane pass occupies residues 172-192 (VIDLIFGVVSGLAGLSSGYFL). At 193–198 (REMGFT) the chain is on the extracellular side. Residues 199–219 (WTFATASLLHVVNIIYITFFL) form a helical membrane-spanning segment. Residues 220 to 259 (QDTVHISEFQQQAPLSYKEHLKETFSGVYMLFKTAPSKKR) are Cytoplasmic-facing. A helical membrane pass occupies residues 260-280 (ILIIVLLFIFMTYLFTMFGGS). Residues 281-296 (SLFTLYELDEPLCWTE) are Extracellular-facing. A helical membrane pass occupies residues 297-317 (VYIGYGAAAFTSISLTSFLGV). Topologically, residues 318–326 (YLFSKCLKD) are cytoplasmic. The chain crosses the membrane as a helical span at residues 327-347 (IYIVFIGIFSYIGGIVMAAFA). At 348 to 349 (KT) the chain is on the extracellular side. The chain crosses the membrane as a helical span at residues 350-370 (TLLMFLVRVPSLFSIMPIPVL). The Cytoplasmic portion of the chain corresponds to 371–384 (RSMLSKVVLPSEQG). Residues 385 to 405 (AVFACIACLEVLTGTISLSVF) form a helical membrane-spanning segment. At 406 to 418 (NVIYAATVAWFSG) the chain is on the extracellular side. The chain crosses the membrane as a helical span at residues 419–439 (FSFLLSASLCLIPLGVLCWLL). Over 440 to 464 (CTSWNGEDLALLVPEEVSSIDSVDS) the chain is Cytoplasmic.

The protein belongs to the major facilitator superfamily. SLC46A family.

It is found in the lysosome membrane. It catalyses the reaction estrone 3-sulfate(out) + n H(+)(out) = estrone 3-sulfate(in) + n H(+)(in). The catalysed reaction is 25-hydroxyvitamin D3 sulfate(out) + n H(+)(out) = 25-hydroxyvitamin D3 sulfate(in) + n H(+)(in). The enzyme catalyses cholate(out) + n H(+)(out) = cholate(in) + n H(+)(in). It carries out the reaction glycocholate(out) + n H(+)(out) = glycocholate(in) + n H(+)(in). It catalyses the reaction taurocholate(out) + n H(+)(out) = taurocholate(in) + n H(+)(in). The catalysed reaction is dehydroepiandrosterone 3-sulfate(out) + n H(+)(out) = dehydroepiandrosterone 3-sulfate(in) + n H(+)(in). Lysosomal proton-coupled steroid conjugate and bile acid transporter. Preferentially recognizes lipophilic steroid conjugates or bile acis as endogenous substrates and seems to mediate escape from lysosomes to the cytoplasm. Modulates hepatic cytosolic copper homeostasis, maybe acting as a lysosomal copper transporter and sequestering copper ions in the lysosome. This chain is Lysosomal proton-coupled steroid conjugate and bile acid symporter SLC46A3 (SLC46A3), found in Gallus gallus (Chicken).